The primary structure comprises 374 residues: MKSGRYIGVMSGTSLDGVDVVLAAIDENMVAQQASLTWPIPVALKEAILSICQGQQLTLSQLGQLDVKLGALFGEAVLALMHQENLHPQDIVAIGCHGQTVWHEPTGDAPHSLQIGDNNQIVAKTGVTVVGDFRRRDIALGGQGAPLVPAFHEALLAHPVERRMVLNIGGIANLSMLIPGQPVRGYDTGPGNMLMDAWIWRQRRMAYDKDAQWAREGKVIIPLLQTFLSDPYFAAPAPKSTGREYFNYGWLERQLAQFPGLAAQDVQATLVELTAVSISEQVLLSGGCERLLVCGGGSRNPLVMARLAGLLPGTEVTTTDEAGISGDDMEALAFAWLAWRTVAGLQGNLPSVTGAREASVLGAIYPANPRHNQS.

Residue 12-19 (GTSLDGVD) coordinates ATP.

It belongs to the anhydro-N-acetylmuramic acid kinase family.

The catalysed reaction is 1,6-anhydro-N-acetyl-beta-muramate + ATP + H2O = N-acetyl-D-muramate 6-phosphate + ADP + H(+). It functions in the pathway amino-sugar metabolism; 1,6-anhydro-N-acetylmuramate degradation. Its pathway is cell wall biogenesis; peptidoglycan recycling. Its function is as follows. Catalyzes the specific phosphorylation of 1,6-anhydro-N-acetylmuramic acid (anhMurNAc) with the simultaneous cleavage of the 1,6-anhydro ring, generating MurNAc-6-P. Is required for the utilization of anhMurNAc either imported from the medium or derived from its own cell wall murein, and thus plays a role in cell wall recycling. In Enterobacter sp. (strain 638), this protein is Anhydro-N-acetylmuramic acid kinase.